A 263-amino-acid polypeptide reads, in one-letter code: Lysine 5,6-aminomutase beta subunit (263 aa).

In terms of domain architecture, B12-binding spans 120–259 (EVVMVGASTG…TFILKEMVQR (140 aa)). Residues 130–136 (TDAHTVG) and histidine 133 contribute to the adenosylcob(III)alamin site. Position 144 is an N6-(pyridoxal phosphate)lysine (lysine 144). Adenosylcob(III)alamin contacts are provided by residues 185-192 (LVSQTVTQ), 219-223 (IAGGA), and 239-244 (FGPGKY).

It belongs to the KamE family. Heterotetramer of 2 alpha and 2 beta subunits. The cofactor is adenosylcob(III)alamin. It depends on pyridoxal 5'-phosphate as a cofactor.

The enzyme catalyses (3S)-3,6-diaminohexanoate = (3S,5S)-3,5-diaminohexanoate. The catalysed reaction is D-lysine = (2R,5S)-2,5-diaminohexanoate. Its pathway is amino-acid degradation; L-lysine degradation via acetate pathway. Functionally, catalyzes the migration of the L-beta-lysine and D-lysine epsilon amino group to the delta carbon to produce 3,5-diaminohexanoate and 2,5-diaminohexanoate, respectively. The chain is Lysine 5,6-aminomutase beta subunit from Fusobacterium nucleatum subsp. nucleatum (strain ATCC 25586 / DSM 15643 / BCRC 10681 / CIP 101130 / JCM 8532 / KCTC 2640 / LMG 13131 / VPI 4355).